Consider the following 100-residue polypeptide: Osteocalcin (100 aa).

Positions 1–23 (MRALTLLALLALATLCITGQAGA) are cleaved as a signal peptide. Positions 24–51 (KPSGAESSKGAAFVSKQEGSEVVKRPRR) are excised as a propeptide. Residues 52-98 (YLYQWLGAPAPYPDPLEPKREVCELNPDCDELADHIGFQEAYRRFYG) form the Gla domain. Proline 60 carries the 4-hydroxyproline modification. Ca(2+) contacts are provided by glutamate 68, glutamate 72, glutamate 75, and aspartate 81. 4-carboxyglutamate occurs at positions 68, 72, and 75. Residues cysteine 74 and cysteine 80 are joined by a disulfide bond.

This sequence belongs to the osteocalcin/matrix Gla protein family. Post-translationally, gamma-carboxyglutamate residues are formed by vitamin K dependent carboxylation by GGCX. These residues are essential for the binding of calcium. Decarboxylation promotes the hormone activity.

The protein localises to the secreted. Functionally, the carboxylated form is one of the main organic components of the bone matrix, which constitutes 1-2% of the total bone protein: it acts as a negative regulator of bone formation and is required to limit bone formation without impairing bone resorption or mineralization. The carboxylated form binds strongly to apatite and calcium. Its function is as follows. The uncarboxylated form acts as a hormone secreted by osteoblasts, which regulates different cellular processes, such as energy metabolism, male fertility and brain development. Regulates of energy metabolism by acting as a hormone favoring pancreatic beta-cell proliferation, insulin secretion and sensitivity and energy expenditure. Uncarboxylated osteocalcin hormone also promotes testosterone production in the testes: acts as a ligand for G protein-coupled receptor GPRC6A at the surface of Leydig cells, initiating a signaling response that promotes the expression of enzymes required for testosterone synthesis in a CREB-dependent manner. Also acts as a regulator of brain development: osteocalcin hormone crosses the blood-brain barrier and acts as a ligand for GPR158 on neurons, initiating a signaling response that prevents neuronal apoptosis in the hippocampus, favors the synthesis of all monoamine neurotransmitters and inhibits that of gamma-aminobutyric acid (GABA). Osteocalcin also crosses the placenta during pregnancy and maternal osteocalcin is required for fetal brain development. This is Osteocalcin (BGLAP) from Macaca mulatta (Rhesus macaque).